A 199-amino-acid chain; its full sequence is uncharacterized protein (199 aa).

Transmembrane regions (helical) follow at residues 1-21 (MEQF…TFIF), 28-48 (IAVS…IALY), 51-71 (LNAA…YLGM), 83-103 (LVAA…WFII), 127-147 (QLVL…FVIQ), and 154-174 (AVGG…LFGI).

Its subcellular location is the cell membrane. This is an uncharacterized protein from Bacillus subtilis (strain 168).